A 179-amino-acid chain; its full sequence is Large ribosomal subunit protein uL5 (179 aa).

Belongs to the universal ribosomal protein uL5 family. As to quaternary structure, part of the 50S ribosomal subunit; part of the 5S rRNA/L5/L18/L25 subcomplex. Contacts the 5S rRNA and the P site tRNA. Forms a bridge to the 30S subunit in the 70S ribosome.

Functionally, this is one of the proteins that bind and probably mediate the attachment of the 5S RNA into the large ribosomal subunit, where it forms part of the central protuberance. In the 70S ribosome it contacts protein S13 of the 30S subunit (bridge B1b), connecting the 2 subunits; this bridge is implicated in subunit movement. Contacts the P site tRNA; the 5S rRNA and some of its associated proteins might help stabilize positioning of ribosome-bound tRNAs. This Albidiferax ferrireducens (strain ATCC BAA-621 / DSM 15236 / T118) (Rhodoferax ferrireducens) protein is Large ribosomal subunit protein uL5.